The chain runs to 434 residues: D-amino acid dehydrogenase (434 aa).

3–17 (VLVLGSGVIGTASAY) is a binding site for FAD.

Belongs to the DadA oxidoreductase family. The cofactor is FAD.

The enzyme catalyses a D-alpha-amino acid + A + H2O = a 2-oxocarboxylate + AH2 + NH4(+). It participates in amino-acid degradation; D-alanine degradation; NH(3) and pyruvate from D-alanine: step 1/1. In terms of biological role, oxidative deamination of D-amino acids. This chain is D-amino acid dehydrogenase, found in Pseudomonas putida (strain GB-1).